We begin with the raw amino-acid sequence, 184 residues long: Oocyte-secreted protein 4A (184 aa).

Positions 1–19 (MKISCVLGKLLMLFELIHG) are cleaved as a signal peptide. N128 is a glycosylation site (N-linked (GlcNAc...) asparagine).

Belongs to the PLAC1 family.

The protein resides in the secreted. The protein is Oocyte-secreted protein 4A of Homo sapiens (Human).